A 468-amino-acid polypeptide reads, in one-letter code: Na(+)/H(+) antiporter NhaA (468 aa).

A run of 10 helical transmembrane segments spans residues 32–52, 83–103, 119–139, 148–168, 178–198, 205–225, 320–340, 354–374, 397–417, and 428–448; these read FLHI…IALL, LHFW…GMEI, ALPM…YLAI, GWAV…ALLG, FLLA…AVAF, GGFL…WIGV, ALHP…NAGV, GAMF…IVSV, LVGL…TLAF, and LGVL…GFIY.

This sequence belongs to the NhaA Na(+)/H(+) (TC 2.A.33) antiporter family.

It is found in the cell inner membrane. The enzyme catalyses Na(+)(in) + 2 H(+)(out) = Na(+)(out) + 2 H(+)(in). Na(+)/H(+) antiporter that extrudes sodium in exchange for external protons. This is Na(+)/H(+) antiporter NhaA from Cupriavidus necator (strain ATCC 17699 / DSM 428 / KCTC 22496 / NCIMB 10442 / H16 / Stanier 337) (Ralstonia eutropha).